A 491-amino-acid chain; its full sequence is Chromosomal replication initiator protein DnaA (491 aa).

Positions methionine 1–aspartate 68 are domain I, interacts with DnaA modulators. The domain II stretch occupies residues aspartate 68–serine 146. Residues arginine 147–alanine 364 form a domain III, AAA+ region region. The ATP site is built by glycine 190, glycine 192, lysine 193, and threonine 194. The tract at residues lysine 365–histidine 491 is domain IV, binds dsDNA.

Belongs to the DnaA family. Oligomerizes as a right-handed, spiral filament on DNA at oriC.

Its subcellular location is the cytoplasm. Functionally, plays an essential role in the initiation and regulation of chromosomal replication. ATP-DnaA binds to the origin of replication (oriC) to initiate formation of the DNA replication initiation complex once per cell cycle. Binds the DnaA box (a 9 base pair repeat at the origin) and separates the double-stranded (ds)DNA. Forms a right-handed helical filament on oriC DNA; dsDNA binds to the exterior of the filament while single-stranded (ss)DNA is stabiized in the filament's interior. The ATP-DnaA-oriC complex binds and stabilizes one strand of the AT-rich DNA unwinding element (DUE), permitting loading of DNA polymerase. After initiation quickly degrades to an ADP-DnaA complex that is not apt for DNA replication. Binds acidic phospholipids. The sequence is that of Chromosomal replication initiator protein DnaA from Nitratidesulfovibrio vulgaris (strain ATCC 29579 / DSM 644 / CCUG 34227 / NCIMB 8303 / VKM B-1760 / Hildenborough) (Desulfovibrio vulgaris).